Consider the following 273-residue polypeptide: Citrate lyase subunit beta-like protein (273 aa).

2 residues coordinate substrate: R64 and E112. Residues E112 and D138 each coordinate Mg(2+).

This sequence belongs to the HpcH/HpaI aldolase family. Citrate lyase beta subunit-like subfamily. As to quaternary structure, homotrimer. The cofactor is Mg(2+).

Its function is as follows. May play a role in fatty acid biosynthesis. The polypeptide is Citrate lyase subunit beta-like protein (citE) (Mycobacterium tuberculosis (strain CDC 1551 / Oshkosh)).